The chain runs to 431 residues: PHD finger-containing protein 1 (431 aa).

Residues 7–59 (GPVCQTCGDIGFEEALVFCDSCMFESIHRYCLGITPIPFTEYITWICEDCDNS) form a PHD-type zinc finger. Positions 10, 13, 25, 28, 34, 37, 53, and 56 each coordinate Zn(2+). The disordered stretch occupies residues 125–221 (EAADSSSVPD…QESSDSRKPH (97 aa)). Residues 128–139 (DSSSVPDHSSCT) show a composition bias toward polar residues. Residues 160 to 171 (KKKKKKKKKKSI) show a composition bias toward basic residues. Low complexity predominate over residues 191–202 (VVEPVEVSSSSP). The span at 205–221 (ETMESKRQESSDSRKPH) shows a compositional bias: basic and acidic residues.

In terms of assembly, interacts directly with AIPP3/BDT1.

Its function is as follows. Together with AIPP3/BDT1, cooperates to form a BAH-PHD bivalent histone reader complex able to read histone H3 lysine 27 trimethylation (H3K27me3) histone marks in order to regulate transcription, especially to prevent early flowering; promotes AIPP3/BDT1 binding to H3K27me3. This chain is PHD finger-containing protein 1, found in Arabidopsis thaliana (Mouse-ear cress).